A 370-amino-acid chain; its full sequence is 5-hydroxytryptamine receptor 5B (370 aa).

Residues 1 to 36 form a disordered region; sequence MEVSNLSGATPGLAFPPGPESCSDSPSSGRSMGSTP. Over 1-48 the chain is Extracellular; that stretch reads MEVSNLSGATPGLAFPPGPESCSDSPSSGRSMGSTPGGLILPGREPPF. Residue Asn5 is glycosylated (N-linked (GlcNAc...) asparagine). Over residues 20 to 36 the composition is skewed to low complexity; sequence ESCSDSPSSGRSMGSTP. A helical membrane pass occupies residues 49–75; it reads SAFTVLVVTLLVLLIAATFLWNLLVLV. The Cytoplasmic segment spans residues 76–88; that stretch reads TILRVRAFHRVPH. The helical transmembrane segment at 89 to 115 threads the bilayer; it reads NLVASTAVSDVLVAVLVMPLSLVSELS. Over 116 to 127 the chain is Extracellular; sequence AGRRWQLGRSLC. A disulfide bridge links Cys127 with Cys205. Residues 128–150 form a helical membrane-spanning segment; the sequence is HVWISFDVLCCTASIWNVAAIAL. Asp134 lines the serotonin pocket. The Cytoplasmic segment spans residues 151–168; the sequence is DRYWTITRHLQYTLRTRS. The chain crosses the membrane as a helical span at residues 169 to 189; sequence RASALMIAITWALSALIALAP. At 190 to 211 the chain is on the extracellular side; sequence LLFGWGEAYDARLQRCQVSQEP. Residues 212-233 form a helical membrane-spanning segment; sequence SYAVFSTCGAFYLPLAVVLFVY. The Cytoplasmic segment spans residues 234–300; sequence WKIYKAAKFR…QKEKRAAMMV (67 aa). The helical transmembrane segment at 301-325 threads the bilayer; that stretch reads GILIGVFVLCWIPFFLTELISPLCA. The Extracellular portion of the chain corresponds to 326 to 327; sequence CS. A helical transmembrane segment spans residues 328–352; sequence LPPIWKSIFLWLGYSNSFFNPLIYT. Residues 353 to 370 lie on the Cytoplasmic side of the membrane; the sequence is AFNKNYNNAFKSLFTKQR.

It belongs to the G-protein coupled receptor 1 family. As to expression, expressed predominantly in the central nervous system; in the hippocampus, habenula, and the doral raphe.

The protein resides in the cell membrane. In terms of biological role, G-protein coupled receptor for 5-hydroxytryptamine (serotonin), a biogenic hormone that functions as a neurotransmitter, a hormone and a mitogen. Also functions as a receptor for ergot alkaloid derivatives and other psychoactive substances. Ligand binding causes a conformation change that triggers signaling via guanine nucleotide-binding proteins (G proteins) and modulates the activity of downstream effectors. Htr5b is coupled to G(i)/G(o) G alpha proteins and mediates inhibitory neurotransmission: signaling inhibits adenylate cyclase activity and activates a phosphatidylinositol-calcium second messenger system that regulates the release of Ca(2+) ions from intracellular stores. The chain is 5-hydroxytryptamine receptor 5B from Mus musculus (Mouse).